The following is a 99-amino-acid chain: Translation initiation factor 1A (99 aa).

Residues 11–84 (RRVRTPRRGE…EKADIVWRYT (74 aa)) form the S1-like domain.

Belongs to the eIF-1A family.

Seems to be required for maximal rate of protein biosynthesis. Enhances ribosome dissociation into subunits and stabilizes the binding of the initiator Met-tRNA(I) to 40 S ribosomal subunits. This chain is Translation initiation factor 1A (eIF1A), found in Methanothermobacter thermautotrophicus (strain ATCC 29096 / DSM 1053 / JCM 10044 / NBRC 100330 / Delta H) (Methanobacterium thermoautotrophicum).